A 319-amino-acid chain; its full sequence is Probable carboxylesterase 5 (319 aa).

N-acetylmethionine is present on Met1. Positions 79-81 (HGG) match the Involved in the stabilization of the negatively charged intermediate by the formation of the oxyanion hole motif. Residues Ser163, Asp262, and His294 contribute to the active site.

It belongs to the 'GDXG' lipolytic enzyme family. In terms of tissue distribution, expressed in roots, leaves, stems, flowers and siliques.

It carries out the reaction a carboxylic ester + H2O = an alcohol + a carboxylate + H(+). In terms of biological role, carboxylesterase acting on esters with varying acyl chain length. The sequence is that of Probable carboxylesterase 5 (CXE5) from Arabidopsis thaliana (Mouse-ear cress).